Reading from the N-terminus, the 497-residue chain is Amino acid oxidase fsqB (497 aa).

Residues Val-14, Phe-15, Asp-38, Asn-53, Ala-57, Asn-58, Arg-63, Val-64, and Val-211 each coordinate FAD. Cys-414 carries the S-8alpha-FAD cysteine modification. Phe-447 and Lys-448 together coordinate FAD.

It belongs to the MSOX/MTOX family. Dimer. It depends on FAD as a cofactor.

It catalyses the reaction (2S,4S,5S)-2-amino-6-(3,4-dihydroxyphenyl)-4-hydroxy-5-(methylamino)hexanoyl-[peptidyl-carrier protein] + O2 = (2S,4S)-2-amino-4-[(3S)-7,8-dihydroxy-1,2,3,4-tetrahydroisoquinolin-3-yl]-4-hydroxybutanoyl-[peptidyl-carrier protein] + H2O2. The enzyme catalyses N-methyl-L-dopa + O2 = (3S)-7,8-dihydroxy-1,2,3,4-tetrahydroisoquinoline-3-carboxylate + H2O2. The catalysed reaction is N-methyl-D-dopa + O2 = (3R)-7,8-dihydroxy-1,2,3,4-tetrahydroisoquinoline-3-carboxylate + H2O2. Its pathway is secondary metabolite biosynthesis. In terms of biological role, amino acid oxidase; part of the gene cluster that mediates the biosynthesis of the isoquinoline alkaloids fumisoquin A, fumisoquin B and fumisoquin C; as well as small amounts of fumipyrrole as a shunt metabolite. The products of the cluster lead to a brown coloration and are important for growth and conidiation. The nonribosomal peptide synthetase-like protein fsqF, which lacks a canonical condensation domain, is required for addition of a serine-derived dehydroalanine moiety to activated tyrosine but is not essential for the subsequent steps leading to isoquinoline formation. A different enzyme, most likely the ATP-grasp enzyme fsqD, is responsible for activation of tyrosine. Three additional enzymes encoded by the fsq cluster, the N-methyltransferase fsqC, the phenol 2-monooxygenase fsqG and the FAD-dependent oxidase fsqB, catalyze the formation of the isoquinoline ring system in the fumisoquins. FsqB converts the fspF thiolation domain-bound (2S,4S,5S)-2-amino-6-(3,4-dihydroxyphenyl)-4-hydroxy-5-(methylamino)hexanoyl into isoquinoline. The cyclization most likely proceeds via a two-step mechanism, beginning with FAD-dependent oxidation of the methyl group to an iminium species followed by electrophilic attack on the deprotonated phenol. Is able to convert N-methyl-3,4-dihydroxy-DL-phenylalanine (N-methyl-DOPA) directly into cyclic isoquinoline, in vitro. The absence of the meta-hydroxyl group, as in L-N-methyl-tyrosine, leads to a 25-fold lower rate of reduction and the formation of the demethylated product L-tyrosine, instead of a cyclic product. Does not accept the D-stereoisomer of N-methyltyrosine, in contrast to N-methyl-DOPA, for which both stereoisomers are oxidized with similar rates. This chain is Amino acid oxidase fsqB, found in Aspergillus fumigatus (strain ATCC MYA-4609 / CBS 101355 / FGSC A1100 / Af293) (Neosartorya fumigata).